Reading from the N-terminus, the 141-residue chain is Large ribosomal subunit protein uL16 (141 aa).

Belongs to the universal ribosomal protein uL16 family. In terms of assembly, part of the 50S ribosomal subunit.

Functionally, binds 23S rRNA and is also seen to make contacts with the A and possibly P site tRNAs. This chain is Large ribosomal subunit protein uL16, found in Kosmotoga olearia (strain ATCC BAA-1733 / DSM 21960 / TBF 19.5.1).